The chain runs to 1218 residues: Formin-A (1218 aa).

One can recognise a C2 domain in the interval 1–108 (MADKLYQIKL…ILGEACNYSV (108 aa)). In terms of domain architecture, GBD/FH3 spans 139–539 (EEKKRHDEIQ…QISLRDKNIG (401 aa)). Residues 563 to 638 (LKSQIESLKK…QLKLTQGTAK (76 aa)) adopt a coiled-coil conformation. A disordered region spans residues 634 to 762 (QGTAKPDSAA…KAAAPPRKEV (129 aa)). Over residues 649–747 (APPPPPPPMT…FGKGPPPPPG (99 aa)) the composition is skewed to pro residues. Residues 652 to 737 (PPPPPMTGGG…AGGPPPPPPP (86 aa)) enclose the FH1 domain. An FH2 domain is found at 759 to 1155 (RKEVPVPALK…IAKREAAKKL (397 aa)). Positions 1034–1061 (SLSQVQAEVATLRKEFVQVQKSIETLNS) form a coiled coil. 2 disordered regions span residues 1153 to 1179 (KKLK…TVEV) and 1198 to 1218 (KNRR…PIDL). The region spanning 1174 to 1209 (GETVEVKESVVDDLLDTIASGDAFKNRRRRARKTDQ) is the DAD domain.

Belongs to the formin homology family. Diaphanous subfamily. In terms of assembly, interacts (via GBD/FH3 domain) with activated Rho-GTPases.

Functionally, formins play an important role in the nucleation of actin and the formation of linear actin filaments. The chain is Formin-A (forA) from Dictyostelium discoideum (Social amoeba).